The sequence spans 289 residues: Protease HtpX homolog (289 aa).

2 helical membrane-spanning segments follow: residues 11–31 (AALF…IAAG) and 34–54 (STTP…YGYW). H138 contributes to the Zn(2+) binding site. E139 is a catalytic residue. Zn(2+) is bound at residue H142. The next 2 membrane-spanning stretches (helical) occupy residues 152 to 172 (SVVA…LIFG) and 182 to 202 (LATI…QMAI). E207 provides a ligand contact to Zn(2+).

This sequence belongs to the peptidase M48B family. It depends on Zn(2+) as a cofactor.

Its subcellular location is the cell membrane. This is Protease HtpX homolog from Paenarthrobacter aurescens (strain TC1).